A 467-amino-acid chain; its full sequence is MFKSVVYSILAASLANAGTIPLGKLADVDKIGTQKDIFPFLGGAGPYYSFPGDYGISRDLPEGCEMKQLQMVGRHGERYPTVSLAKTIKSTWYKLSNYTRQFNGSLSFLNDDYEFFIRDDDDLEMETTFANSDDVLNPYTGEMNAKRHARDFLAQYGYMVENQTSFAVFTSNSKRCHDTAQYFIDGLGDQFNITLQTVSEAESAGANTLSACNSCPAWDYDANDDIVNEYDTTYLDDIAKRLNKENKGLNLTSTDASTLFSWCAFEVNAKGYSDVCDIFTKDELVHYSYYQDLHTYYHEGPGYDIIKSVGSNLFNASVKLLKQSEIQDQKVWLSFTHDTDILNFLTTAGIIDDKNNLTAEYVPFMGNTFHRSWYVPQGARVYTEKFQCSNDTYVRYVINDAVVPIETCSTGPGFSCEINDFYDYAEKRVAGTDFLKVCNVSSVSNSTELTFYWDWNTTHYNASLLRQ.

An N-terminal signal peptide occupies residues Met1–Ala17. The active-site Nucleophile is His75. Residues Asn97, Asn103, Asn162, Asn192, Asn250, and Asn315 are each glycosylated (N-linked (GlcNAc...) asparagine). Asp338 acts as the Proton donor in catalysis. N-linked (GlcNAc...) asparagine glycosylation is found at Asn356, Asn390, Asn439, Asn445, Asn456, and Asn461.

It belongs to the histidine acid phosphatase family. In terms of processing, glycosylated during secretion across the membrane.

The protein resides in the secreted. The enzyme catalyses a phosphate monoester + H2O = an alcohol + phosphate. In terms of biological role, partially mediates extracellular nucleotide derived phosphate hydrolysis along with NPP1 and NPP2. This is Repressible acid phosphatase (PHO5) from Saccharomyces cerevisiae (strain ATCC 204508 / S288c) (Baker's yeast).